The sequence spans 159 residues: 2-C-methyl-D-erythritol 2,4-cyclodiphosphate synthase (159 aa).

2 residues coordinate a divalent metal cation: Asp-10 and His-12. 4-CDP-2-C-methyl-D-erythritol 2-phosphate is bound by residues 10–12 (DVH) and 36–37 (HS). Residue His-44 coordinates a divalent metal cation. 4-CDP-2-C-methyl-D-erythritol 2-phosphate-binding positions include 58-60 (DIG), 63-67 (FPDTD), 102-108 (AQAPKMA), 134-137 (TTTE), Phe-141, and Arg-144.

The protein belongs to the IspF family. As to quaternary structure, homotrimer. A divalent metal cation is required as a cofactor.

It catalyses the reaction 4-CDP-2-C-methyl-D-erythritol 2-phosphate = 2-C-methyl-D-erythritol 2,4-cyclic diphosphate + CMP. It functions in the pathway isoprenoid biosynthesis; isopentenyl diphosphate biosynthesis via DXP pathway; isopentenyl diphosphate from 1-deoxy-D-xylulose 5-phosphate: step 4/6. In terms of biological role, involved in the biosynthesis of isopentenyl diphosphate (IPP) and dimethylallyl diphosphate (DMAPP), two major building blocks of isoprenoid compounds. Catalyzes the conversion of 4-diphosphocytidyl-2-C-methyl-D-erythritol 2-phosphate (CDP-ME2P) to 2-C-methyl-D-erythritol 2,4-cyclodiphosphate (ME-CPP) with a corresponding release of cytidine 5-monophosphate (CMP). This Shewanella sp. (strain ANA-3) protein is 2-C-methyl-D-erythritol 2,4-cyclodiphosphate synthase.